Consider the following 219-residue polypeptide: uncharacterized protein (219 aa).

A disordered region spans residues 70-102; that stretch reads VHIGDNHPEPKNESKTQPKIESKKEPTLKQEEQ. A compositionally biased stretch (basic and acidic residues) spans 73-101; the sequence is GDNHPEPKNESKTQPKIESKKEPTLKQEE. A coiled-coil region spans residues 96–120; the sequence is TLKQEEQTIQAEEEAQKIAKEETRE. Transmembrane regions (helical) follow at residues 126 to 146, 153 to 173, and 192 to 212; these read GGEI…VNML, IFGL…VIVL, and TYGV…AIFF.

It is found in the membrane. This is an uncharacterized protein from Acanthamoeba polyphaga mimivirus (APMV).